Consider the following 149-residue polypeptide: Arginine repressor (149 aa).

The protein belongs to the ArgR family.

Its subcellular location is the cytoplasm. Its pathway is amino-acid biosynthesis; L-arginine biosynthesis [regulation]. Its function is as follows. Regulates arginine biosynthesis genes. In Bacillus cereus (strain ATCC 10987 / NRS 248), this protein is Arginine repressor.